Here is a 141-residue protein sequence, read N- to C-terminus: ATP synthase epsilon chain (141 aa).

The protein belongs to the ATPase epsilon chain family. As to quaternary structure, F-type ATPases have 2 components, CF(1) - the catalytic core - and CF(0) - the membrane proton channel. CF(1) has five subunits: alpha(3), beta(3), gamma(1), delta(1), epsilon(1). CF(0) has three main subunits: a, b and c.

The protein localises to the cell inner membrane. Produces ATP from ADP in the presence of a proton gradient across the membrane. This chain is ATP synthase epsilon chain, found in Thioalkalivibrio sulfidiphilus (strain HL-EbGR7).